The primary structure comprises 647 residues: MHTGLEISIPHNLQMSKLLDTINSPSDLKKLTLDELRELAVQIREELVNRVTLNGGHLASSLGVVELTIALHRVFESPKDKIIWDVGHQSYAHKLLTGRREQFATLRQHGGLSGFTCRDESPHDPFGAGHASTSISAGLGMAVARDLAKEDYSVISVIGDGAISGGMSFEAINNAGHLHTKFIVILNDNGMAISPSTGALSKFLNNVRFDPRFEFAKRGAKQTITNMPFGKSVWAFTKSIKRKFEKSMLPGSLWEELGFIYLGPVDGHNIRELEAALKCAKDFESQPVLIHMITKKGKGYDDAEADAVKYHGIAPKSGGLKSGHGLSYSQVFGQTLHKIMSDNPKVVAITAAMTDGCGLSEVAADFPDRVFDVGICEQHAVTFAAGMATQGYIPVVVIYSTFLQRSFDQIIHDVCLQKLPVVFAIDRGGIVGDDGKTHQGIFDLSFMSLIPDMIVTAPSDENDLQHLLYTAVNSGKPFALRYPRGFGEGVETEGTLRNIPIGENEVLASGSEIAIFATGKSVAFAKEAMEILAESGIKPTLVNNRYISPLDTELILKIAGNHKYLITVEENVLSGGLGSRINTILAEAGLVNAVKIANIAVPDKFVEHGNQSLLRAKYGLDGKGIAQKVLSLMANTGEAKHQQILCP.

Thiamine diphosphate is bound by residues histidine 88 and 129 to 131; that span reads GHA. Aspartate 160 lines the Mg(2+) pocket. Residues 161–162, asparagine 189, tyrosine 300, and glutamate 377 contribute to the thiamine diphosphate site; that span reads GA. Asparagine 189 contributes to the Mg(2+) binding site.

This sequence belongs to the transketolase family. DXPS subfamily. As to quaternary structure, homodimer. The cofactor is Mg(2+). Requires thiamine diphosphate as cofactor.

The catalysed reaction is D-glyceraldehyde 3-phosphate + pyruvate + H(+) = 1-deoxy-D-xylulose 5-phosphate + CO2. The protein operates within metabolic intermediate biosynthesis; 1-deoxy-D-xylulose 5-phosphate biosynthesis; 1-deoxy-D-xylulose 5-phosphate from D-glyceraldehyde 3-phosphate and pyruvate: step 1/1. Functionally, catalyzes the acyloin condensation reaction between C atoms 2 and 3 of pyruvate and glyceraldehyde 3-phosphate to yield 1-deoxy-D-xylulose-5-phosphate (DXP). The chain is 1-deoxy-D-xylulose-5-phosphate synthase from Dehalococcoides mccartyi (strain ATCC BAA-2266 / KCTC 15142 / 195) (Dehalococcoides ethenogenes (strain 195)).